We begin with the raw amino-acid sequence, 450 residues long: Folate synthesis bifunctional protein (450 aa).

Residues 1–166 form an HPPK region; that stretch reads MTSWNFVCLS…TFAELAAIYP (166 aa). One can recognise a Pterin-binding domain in the interval 180–441; sequence TQIMGIVNIT…QVEGNRRALA (262 aa). Positions 182-450 are DHPS; sequence IMGIVNITDN…AAAAWAGMFV (269 aa). A Mg(2+)-binding site is contributed by asparagine 187. (7,8-dihydropterin-6-yl)methyl diphosphate-binding positions include threonine 227, aspartate 267, asparagine 287, aspartate 358, lysine 395, and 429-431; that span reads RVH.

It in the C-terminal section; belongs to the DHPS family. In the N-terminal section; belongs to the HPPK family. The cofactor is Mg(2+).

The enzyme catalyses 6-hydroxymethyl-7,8-dihydropterin + ATP = (7,8-dihydropterin-6-yl)methyl diphosphate + AMP + H(+). The catalysed reaction is (7,8-dihydropterin-6-yl)methyl diphosphate + 4-aminobenzoate = 7,8-dihydropteroate + diphosphate. It participates in cofactor biosynthesis; tetrahydrofolate biosynthesis; 2-amino-4-hydroxy-6-hydroxymethyl-7,8-dihydropteridine diphosphate from 7,8-dihydroneopterin triphosphate: step 4/4. It functions in the pathway cofactor biosynthesis; tetrahydrofolate biosynthesis; 7,8-dihydrofolate from 2-amino-4-hydroxy-6-hydroxymethyl-7,8-dihydropteridine diphosphate and 4-aminobenzoate: step 1/2. This is Folate synthesis bifunctional protein (folKP) from Chlamydia trachomatis serovar D (strain ATCC VR-885 / DSM 19411 / UW-3/Cx).